Here is a 276-residue protein sequence, read N- to C-terminus: Formamidopyrimidine-DNA glycosylase (276 aa).

Residue proline 2 is the Schiff-base intermediate with DNA of the active site. Glutamate 3 functions as the Proton donor in the catalytic mechanism. Catalysis depends on lysine 60, which acts as the Proton donor; for beta-elimination activity. Residues arginine 113 and arginine 152 each contribute to the DNA site. The FPG-type zinc-finger motif lies at 241–275 (NVFRKTGHPCPRCGHLIEKLIVAQRSTHICPICQK). Arginine 265 functions as the Proton donor; for delta-elimination activity in the catalytic mechanism.

Belongs to the FPG family. As to quaternary structure, monomer. Zn(2+) serves as cofactor.

It carries out the reaction Hydrolysis of DNA containing ring-opened 7-methylguanine residues, releasing 2,6-diamino-4-hydroxy-5-(N-methyl)formamidopyrimidine.. It catalyses the reaction 2'-deoxyribonucleotide-(2'-deoxyribose 5'-phosphate)-2'-deoxyribonucleotide-DNA = a 3'-end 2'-deoxyribonucleotide-(2,3-dehydro-2,3-deoxyribose 5'-phosphate)-DNA + a 5'-end 5'-phospho-2'-deoxyribonucleoside-DNA + H(+). Involved in base excision repair of DNA damaged by oxidation or by mutagenic agents. Acts as a DNA glycosylase that recognizes and removes damaged bases. Has a preference for oxidized purines, such as 7,8-dihydro-8-oxoguanine (8-oxoG). Has AP (apurinic/apyrimidinic) lyase activity and introduces nicks in the DNA strand. Cleaves the DNA backbone by beta-delta elimination to generate a single-strand break at the site of the removed base with both 3'- and 5'-phosphates. The chain is Formamidopyrimidine-DNA glycosylase from Protochlamydia amoebophila (strain UWE25).